We begin with the raw amino-acid sequence, 704 residues long: Low calcium response locus protein D (704 aa).

Transmembrane regions (helical) follow at residues 18 to 35 (IMLA…VLPL), 42 to 61 (ILIA…AIYI), 108 to 132 (FVVG…FLVI), 200 to 220 (AIAG…IGVT), 235 to 259 (ILTV…GIIV), 278 to 297 (VVAQ…LFGL), and 304 to 320 (VTFL…GYML).

It belongs to the FHIPEP (flagella/HR/invasion proteins export pore) family.

It is found in the cell inner membrane. Its function is as follows. Could be involved in the secretion of the yop virulence proteins. This chain is Low calcium response locus protein D (lcrD), found in Yersinia pestis.